Reading from the N-terminus, the 266-residue chain is Syntaxin-71 (266 aa).

Residues 1 to 243 (MTVIDILTRV…TVNQLRSSRN (243 aa)) lie on the Cytoplasmic side of the membrane. Position 12 is a phosphoserine (Ser12). Residues 44-87 (ETQIETALEKAELVTKEKNRAAAVAMNAEIRRTKARLSEEVPKL) adopt a coiled-coil conformation. Residues 122–146 (DGTAGGPKSTSAWTPSSTTSRPDIK) are disordered. Residues 130–141 (STSAWTPSSTTS) show a composition bias toward low complexity. The t-SNARE coiled-coil homology domain occupies 172-234 (EMRKIKQEQG…KNTNVRLKDT (63 aa)). A helical; Anchor for type IV membrane protein membrane pass occupies residues 244-264 (FCIDIVLLCIVLGIAAYLYNV). At 265 to 266 (LK) the chain is on the vesicular side.

This sequence belongs to the syntaxin family. As to quaternary structure, part of the t-SNARE complex. In terms of tissue distribution, expressed in root, leaf, stem, flower and silique.

Its subcellular location is the membrane. In terms of biological role, vesicle trafficking protein that functions in the secretory pathway. The protein is Syntaxin-71 (SYP71) of Arabidopsis thaliana (Mouse-ear cress).